The chain runs to 180 residues: ATP-dependent protease subunit HslV (180 aa).

Threonine 5 is a catalytic residue. Residues glycine 161, cysteine 164, and threonine 167 each coordinate Na(+).

The protein belongs to the peptidase T1B family. HslV subfamily. A double ring-shaped homohexamer of HslV is capped on each side by a ring-shaped HslU homohexamer. The assembly of the HslU/HslV complex is dependent on binding of ATP.

Its subcellular location is the cytoplasm. The catalysed reaction is ATP-dependent cleavage of peptide bonds with broad specificity.. With respect to regulation, allosterically activated by HslU binding. Its function is as follows. Protease subunit of a proteasome-like degradation complex believed to be a general protein degrading machinery. This chain is ATP-dependent protease subunit HslV, found in Campylobacter fetus subsp. fetus (strain 82-40).